Reading from the N-terminus, the 286-residue chain is Forkhead box protein E3 (286 aa).

The segment at 1–62 (MDAHVAFSGF…GRRRRRPLQR (62 aa)) is disordered. The fork-head DNA-binding region spans 64–158 (KPPYSYIALI…DNGSFLRRRK (95 aa)).

The protein resides in the nucleus. Functionally, transcription factor that controls lens epithelial cell growth through regulation of proliferation, apoptosis and cell cycle. During lens development, controls the ratio of the lens fiber cells to the cells of the anterior lens epithelium by regulating the rate of proliferation and differentiation. Controls lens vesicle closure and subsequent separation of the lens vesicle from ectoderm. Controls the expression of DNAJB1 in a pathway that is crucial for the development of the anterior segment of the eye. This chain is Forkhead box protein E3 (Foxe3), found in Rattus norvegicus (Rat).